We begin with the raw amino-acid sequence, 126 residues long: Desulfoferrodoxin (126 aa).

Positions 10, 13, 29, 30, 49, 69, 75, 116, and 119 each coordinate Fe cation.

This sequence belongs to the desulfoferrodoxin family. Homodimer. It depends on Fe(3+) as a cofactor. The cofactor is Cu(2+).

It catalyses the reaction reduced [rubredoxin] + superoxide + 2 H(+) = oxidized [rubredoxin] + H2O2. In terms of biological role, catalyzes the one-electron reduction of superoxide anion radical to hydrogen peroxide at a nonheme ferrous iron center. Plays a fundamental role in case of oxidative stress via its superoxide detoxification activity. In Syntrophotalea carbinolica (strain DSM 2380 / NBRC 103641 / GraBd1) (Pelobacter carbinolicus), this protein is Desulfoferrodoxin (dfx).